We begin with the raw amino-acid sequence, 194 residues long: Holliday junction branch migration complex subunit RuvA (194 aa).

The interval 1 to 64 is domain I; it reads MIGRLRGVLT…DDSAALYGFL (64 aa). Residues 65–140 form a domain II region; the sequence is SESERRLFRH…RAADFNNGIS (76 aa). Residues 140 to 144 are flexible linker; sequence STSGK. Residues 145 to 194 form a domain III region; it reads LNLDTVSEAALALQQLGYKPAEAARMARDAGTESDDVATVIKKALQAALC.

The protein belongs to the RuvA family. As to quaternary structure, homotetramer. Forms an RuvA(8)-RuvB(12)-Holliday junction (HJ) complex. HJ DNA is sandwiched between 2 RuvA tetramers; dsDNA enters through RuvA and exits via RuvB. An RuvB hexamer assembles on each DNA strand where it exits the tetramer. Each RuvB hexamer is contacted by two RuvA subunits (via domain III) on 2 adjacent RuvB subunits; this complex drives branch migration. In the full resolvosome a probable DNA-RuvA(4)-RuvB(12)-RuvC(2) complex forms which resolves the HJ.

Its subcellular location is the cytoplasm. The RuvA-RuvB-RuvC complex processes Holliday junction (HJ) DNA during genetic recombination and DNA repair, while the RuvA-RuvB complex plays an important role in the rescue of blocked DNA replication forks via replication fork reversal (RFR). RuvA specifically binds to HJ cruciform DNA, conferring on it an open structure. The RuvB hexamer acts as an ATP-dependent pump, pulling dsDNA into and through the RuvAB complex. HJ branch migration allows RuvC to scan DNA until it finds its consensus sequence, where it cleaves and resolves the cruciform DNA. The polypeptide is Holliday junction branch migration complex subunit RuvA (Xylella fastidiosa (strain M12)).